The following is a 426-amino-acid chain: Enolase (426 aa).

Glutamine 162 is a (2R)-2-phosphoglycerate binding site. Glutamate 204 functions as the Proton donor in the catalytic mechanism. The Mg(2+) site is built by aspartate 241, glutamate 284, and aspartate 311. Positions 336, 365, 366, and 387 each coordinate (2R)-2-phosphoglycerate. The active-site Proton acceptor is the lysine 336.

The protein belongs to the enolase family. In terms of assembly, component of the RNA degradosome, a multiprotein complex involved in RNA processing and mRNA degradation. It depends on Mg(2+) as a cofactor.

It localises to the cytoplasm. Its subcellular location is the secreted. The protein resides in the cell surface. It catalyses the reaction (2R)-2-phosphoglycerate = phosphoenolpyruvate + H2O. Its pathway is carbohydrate degradation; glycolysis; pyruvate from D-glyceraldehyde 3-phosphate: step 4/5. Functionally, catalyzes the reversible conversion of 2-phosphoglycerate (2-PG) into phosphoenolpyruvate (PEP). It is essential for the degradation of carbohydrates via glycolysis. This Thioalkalivibrio sulfidiphilus (strain HL-EbGR7) protein is Enolase.